A 67-amino-acid chain; its full sequence is Large ribosomal subunit protein bL32 (67 aa).

A compositionally biased stretch (basic residues) spans 1–20 (MAVPKRKMSRSNTRARRAKW). The disordered stretch occupies residues 1–24 (MAVPKRKMSRSNTRARRAKWKATA).

This sequence belongs to the bacterial ribosomal protein bL32 family.

The chain is Large ribosomal subunit protein bL32 from Renibacterium salmoninarum (strain ATCC 33209 / DSM 20767 / JCM 11484 / NBRC 15589 / NCIMB 2235).